The sequence spans 506 residues: MEKFQSYLGLDRSQQHYFLYPLIFQEYIYVLAHDHGLNRSILLENAGYDNKSSLLIVKRLITRMYQQNHLILSVNDSKQTPFLGDNKNFYSQVMSEVSSIIMEIPFSLRLISSLERKGVVKFDNLRSIHSIFSFLEDNFSHLNYVLDILIPYPAHLEILVQALRYWIEDASSLHLLRFFLHEYHNRDSLITSNSKKASSSFSKRNHRLFFFLYTSHVCEYESGFIFLRNQSSHLRSTSSGALLERIYFYGKIEHLAEVFTRAFQANLWLFKDPFMHYVRYQGKSILASKGTFLLMNKWKYYFVNFWKSYFYLWSQPGRIYINQLSNHSLDFLGYRSSVRLKPSMVRSQMLENAFLIDNAIKKFDTIVPIMPLIGSLAKSKFCNALGHPIGKAIWADLSDSDIIDRFGRIYRNLSHYHSGSSKKKSLYRVKYILRLSCARTLARKHKSTVRAFLKRFGSELLEEFFTEEEQVFSLTFPRVSSISRRLSRRPIWYLDIICINDLANHE.

It belongs to the intron maturase 2 family. MatK subfamily.

The protein resides in the plastid. It is found in the chloroplast. Usually encoded in the trnK tRNA gene intron. Probably assists in splicing its own and other chloroplast group II introns. This chain is Maturase K, found in Atractylodes lancea (Atractylodes japonica).